The chain runs to 423 residues: Glucose-1-phosphate adenylyltransferase (423 aa).

Alpha-D-glucose 1-phosphate contacts are provided by residues Y98, G163, 178-179 (EK), and S189.

This sequence belongs to the bacterial/plant glucose-1-phosphate adenylyltransferase family. As to quaternary structure, homotetramer.

It catalyses the reaction alpha-D-glucose 1-phosphate + ATP + H(+) = ADP-alpha-D-glucose + diphosphate. The protein operates within glycan biosynthesis; glycogen biosynthesis. Functionally, involved in the biosynthesis of ADP-glucose, a building block required for the elongation reactions to produce glycogen. Catalyzes the reaction between ATP and alpha-D-glucose 1-phosphate (G1P) to produce pyrophosphate and ADP-Glc. The polypeptide is Glucose-1-phosphate adenylyltransferase (Thermotoga neapolitana (strain ATCC 49049 / DSM 4359 / NBRC 107923 / NS-E)).